The sequence spans 217 residues: Large ribosomal subunit protein bL25 (217 aa).

This sequence belongs to the bacterial ribosomal protein bL25 family. CTC subfamily. As to quaternary structure, part of the 50S ribosomal subunit; part of the 5S rRNA/L5/L18/L25 subcomplex. Contacts the 5S rRNA. Binds to the 5S rRNA independently of L5 and L18.

In terms of biological role, this is one of the proteins that binds to the 5S RNA in the ribosome where it forms part of the central protuberance. In Methylobacterium sp. (strain 4-46), this protein is Large ribosomal subunit protein bL25.